The following is an 896-amino-acid chain: FHIP family protein C05D11.8 (896 aa).

The tract at residues 823–865 (STASSPRTSDDHDPTLFYGRSTMAPPGRKPLLREPSRQETLDD) is disordered. Residues 853–865 (LLREPSRQETLDD) show a composition bias toward basic and acidic residues.

Belongs to the FHIP family.

This is FHIP family protein C05D11.8 from Caenorhabditis elegans.